A 373-amino-acid polypeptide reads, in one-letter code: CASP-like protein UU6 (373 aa).

Disordered stretches follow at residues 1 to 100 (MGTL…GSEG) and 172 to 195 (TKET…PKKK). Residues 1–204 (MGTLTDPTVD…KHRLRKHLTA (204 aa)) lie on the Cytoplasmic side of the membrane. Polar residues predominate over residues 56-74 (KTNTGNAAESTASTENGET). Residues 205–225 (IGAYSFAFRFSETVLSLIAIV) form a helical membrane-spanning segment. The Extracellular portion of the chain corresponds to 226 to 253 (VMCSTRGSMRTDGVDFGTLKFNHFQAYR). The chain crosses the membrane as a helical span at residues 254 to 274 (YLVAVNVIVFVYSTFQFIQLL). At 275-276 (YT) the chain is on the cytoplasmic side. The helical transmembrane segment at 277-297 (VILGISFIPSIFISTWMTFGF) threads the bilayer. Residues 298–342 (DQLFLYLLLSASTSAATVANMSYTGEMGIQLCSRFDVGSFCSKAD) are Extracellular-facing. An N-linked (GlcNAc...) asparagine glycan is attached at Asn-317. The helical transmembrane segment at 343 to 363 (VAVTMSFFAVLAMLSSTILAI) threads the bilayer. Over 364 to 373 (YRIAVLLREY) the chain is Cytoplasmic.

This sequence belongs to the Casparian strip membrane proteins (CASP) family. As to quaternary structure, homodimer and heterodimers.

It is found in the cell membrane. This chain is CASP-like protein UU6, found in Physcomitrium patens (Spreading-leaved earth moss).